The sequence spans 390 residues: DNA primase small subunit PriS (390 aa).

Active-site residues include Asp-98, Asp-100, and Asp-296.

Belongs to the eukaryotic-type primase small subunit family. As to quaternary structure, heterodimer of a small subunit (PriS) and a large subunit (PriL). Mg(2+) serves as cofactor. Mn(2+) is required as a cofactor.

Catalytic subunit of DNA primase, an RNA polymerase that catalyzes the synthesis of short RNA molecules used as primers for DNA polymerase during DNA replication. The small subunit contains the primase catalytic core and has DNA synthesis activity on its own. Binding to the large subunit stabilizes and modulates the activity, increasing the rate of DNA synthesis while decreasing the length of the DNA fragments, and conferring RNA synthesis capability. The DNA polymerase activity may enable DNA primase to also catalyze primer extension after primer synthesis. May also play a role in DNA repair. In Methanococcoides burtonii (strain DSM 6242 / NBRC 107633 / OCM 468 / ACE-M), this protein is DNA primase small subunit PriS.